The chain runs to 47 residues: Ruminococcin-A (47 aa).

Positions 1–23 are cleaved as a signal peptide; the sequence is MRNDVLTLTNPMEEKELEQILGG. A 2,3-didehydrobutyrine mark is found at T30 and T39. Positions 30–35 form a cross-link, beta-methyllanthionine (Thr-Cys); sequence TISHEC. A cross-link (lanthionine (Ser-Cys)) is located at residues 32-46; the sequence is SHECNMNTWQFLFTC. A cross-link (beta-methyllanthionine (Thr-Cys)) is located at residues 45 to 47; sequence TCC.

Post-translationally, maturation of lantibiotics involves the enzymatic conversion of Thr, and Ser into dehydrated AA and the formation of thioether bonds with cysteine. This is followed by membrane translocation and cleavage of the modified precursor. It is not established whether the 2,3-didehydrobutyrine is the E- or Z-isomer.

The protein localises to the secreted. Functionally, lanthionine-containing peptide antibiotic (lantibiotic) active on Gram-positive bacteria. The bactericidal activity of lantibiotics is based on depolarization of energized bacterial cytoplasmic membranes, initiated by the formation of aqueous transmembrane pores. Ruminococcin A is a broad spectrum bacteriocin exhibiting activity against a wide range of pathogenic clostridia and B.longum. This is Ruminococcin-A (rumA1) from Mediterraneibacter gnavus (Ruminococcus gnavus).